The following is a 336-amino-acid chain: Probable assembly chaperone of rpl4 (336 aa).

TPR repeat units lie at residues 39 to 72 (GRAFELLGEVYAELADVKKARSAFKEAVSRSKNL), 75 to 108 (DQGYEKYLWLAQINDNGSKALKLYQKGVTILERL), 110 to 143 (IDKGEDADLKKKIQGAYCSIAELFMTDLCMQPDA), and 162 to 195 (AEALQTLASMRISQQKIEEAKDALSKCLQSISRA). The tract at residues 316–336 (DEENEEAEWETSENEEEMDED) is disordered.

It belongs to the ACL4 family.

The protein resides in the cytoplasm. The protein localises to the nucleus. Its subcellular location is the nucleolus. In terms of biological role, acts as a chaperone for the L4 ribosomal subunit encoded by rpl4A and rpl4B, required for hierarchical ribosome assembly. Shields ribosomal protein L4 until timely release and insertion into the pre-ribosome is possible, once ribosomal protein L18 is present. This chain is Probable assembly chaperone of rpl4, found in Schizosaccharomyces pombe (strain 972 / ATCC 24843) (Fission yeast).